The chain runs to 1456 residues: Retrovirus-related Pol polyprotein from transposon RE2 (1456 aa).

Residues 205-252 form a disordered region; that stretch reads NVVTHRNTNTNRNQNNRGDNRNYNNNNNRSNSWQPSSSGSRSDNRQPK. The span at 210–245 shows a compositional bias: low complexity; that stretch reads RNTNTNRNQNNRGDNRNYNNNNNRSNSWQPSSSGSR. A CCHC-type zinc finger spans residues 257–273; that stretch reads RCQICSVQGHSAKRCPQ. Over residues 276–291 the composition is skewed to low complexity; that stretch reads QFQSTTNQQQSTSPFT. A disordered region spans residues 276 to 295; the sequence is QFQSTTNQQQSTSPFTPWQP. The For protease activity role is filled by Asp-313. The 164-residue stretch at 498–661 folds into the Integrase catalytic domain; the sequence is TSSKPLEYIY…SPFQKLFGQP (164 aa). 2 residues coordinate Mg(2+): Asp-509 and Asp-571. A compositionally biased stretch (polar residues) spans 738–754; the sequence is STSQEQRSDSAPNWPSH. Residues 738–896 are disordered; sequence STSQEQRSDS…PPLPPVLPAP (159 aa). Low complexity predominate over residues 793–814; sequence SSSNLPSSSISSPSSSEPTAPS. The span at 816–827 shows a compositional bias: polar residues; sequence NGPQPTAQPHQT. 2 stretches are compositionally biased toward low complexity: residues 828 to 841 and 849 to 886; these read QNSN…NNPN and SPNQ…STST. The span at 887–896 shows a compositional bias: pro residues; the sequence is PPLPPVLPAP. One can recognise a Reverse transcriptase Ty1/copia-type domain in the interval 965 to 1208; it reads NHTWDLVPPP…LTAKPVATPM (244 aa).

The enzyme catalyses DNA(n) + a 2'-deoxyribonucleoside 5'-triphosphate = DNA(n+1) + diphosphate. The chain is Retrovirus-related Pol polyprotein from transposon RE2 (RE2) from Arabidopsis thaliana (Mouse-ear cress).